Here is an 874-residue protein sequence, read N- to C-terminus: Adhesion G-protein coupled receptor D1 (874 aa).

The signal sequence occupies residues 1–25 (MEKLLRLCCWYSWLLLFYYNFQVRG). The Extracellular portion of the chain corresponds to 26–567 (VYSRSQDHPG…LARGHQVALS (542 aa)). The Pentraxin (PTX) domain occupies 79-276 (KGVTLLYYGR…ASPVMPTDAY (198 aa)). 9 N-linked (GlcNAc...) asparagine glycosylation sites follow: Asn90, Asn185, Asn282, Asn302, Asn319, Asn394, Asn476, Asn501, and Asn533. The GAIN-B domain occupies 371–557 (QVTVEGSSAM…AILMQVVPLE (187 aa)). Cystine bridges form between Cys510–Cys539 and Cys527–Cys541. Residues 510–557 (CAFLDFSSGEGVWSNHGCALTRGNLTYSVCRCTHLTNFAILMQVVPLE) form a GPS region. Positions 546–554 (NFAILMQVV) are stachel. Position 563 (Gln563) interacts with 17beta-hydroxy-5alpha-androstan-3-one. A helical transmembrane segment spans residues 568–590 (SISYVGCSLSVLCLVATLVTFAV). The Cytoplasmic portion of the chain corresponds to 591 to 601 (LSSVSTIRNQR). Residues 602 to 623 (YHIHANLSFAVLVAQVLLLISF) form a helical membrane-spanning segment. Topologically, residues 624 to 632 (RLEPGTTPC) are extracellular. A disulfide bridge links Cys632 with Cys704. A helical transmembrane segment spans residues 633-655 (QVMAVLLHYFFLSAFAWMLVEGL). The Cytoplasmic portion of the chain corresponds to 656 to 673 (HLYSMVIKVFGSEDSKHR). A helical transmembrane segment spans residues 674-695 (YYYGMGWGFPLLICIISLSFAM). Residues 696-710 (DSYGTSNNCWLSLAS) lie on the Extracellular side of the membrane. Residues 711–732 (GAIWAFVAPALFVIVVNIGILI) traverse the membrane as a helical segment. Over 733–757 (AVTRVISQISADNYKIHGDPSAFKL) the chain is Cytoplasmic. A helical transmembrane segment spans residues 758–780 (TAKAVAVLLPILGTSWVFGVLAV). The Extracellular portion of the chain corresponds to 781-783 (NGC). The chain crosses the membrane as a helical span at residues 784 to 810 (AVVFQYMFATLNSLQGLFIFLFHCLLN). Asn795 contributes to the 17beta-hydroxy-5alpha-androstan-3-one binding site. Over 811–874 (SEVRAAFKHK…SAHRVDLSAV (64 aa)) the chain is Cytoplasmic. The disordered stretch occupies residues 854–874 (TKLSPWDKSSHSAHRVDLSAV). Basic and acidic residues predominate over residues 861 to 874 (KSSHSAHRVDLSAV).

The protein belongs to the G-protein coupled receptor 2 family. Adhesion G-protein coupled receptor (ADGR) subfamily. Heterodimer of 2 chains generated by proteolytic processing; the large extracellular N-terminal fragment and the membrane-bound C-terminal fragment predominantly remain associated and non-covalently linked. Interacts with ESYT1; interaction takes place in absence of cytosolic calcium and inhibits the G protein-coupled receptor activity of ADGRD1. Autoproteolytically processed at the GPS region of the GAIN-B domain; this cleavage modulates receptor activity. Cleavage takes place early in the secretory pathway before N-glycosylation. Up-regulated in CD133(+) cell population of glioblastoma.

The protein localises to the cell membrane. Forms a heterodimer of 2 chains generated by proteolytic processing that remain associated through non-covalent interactions mediated by the GAIN-B domain. In the inactivated receptor, the Stachel sequence (also named stalk) is embedded in the GAIN-B domain, where it adopts a beta-strand conformation. On activation, the Stachel moves into the 7 transmembrane region and adopts a twisted hook-shaped configuration that forms contacts within the receptor, leading to coupling of a G-alpha protein, which activates signaling. The cleaved GAIN-B and N-terminal domains can then dissociate from the rest of the receptor. Interaction with ESYT1 in absence of cytosolic calcium inhibits the G protein-coupled receptor activity; interaction and inhibition is relieved when cytosolic calcium increases. Activated by AP503, a small molecule that activates ADGRD1 without activating androgen nuclear receptors: AP503 enhances muscle strength without eliciting androgenic adverse effects. Activated by the 8E3E8 antibody that targets the N-terminus. Adhesion G-protein coupled receptor (aGPCR) for androgen hormone 5alpha-dihydrotestosterone (5alpha-DHT), also named 17beta-hydroxy-5alpha-androstan-3-one, the most potent hormone among androgens. Also activated by methenolone drug. Ligand binding causes a conformation change that triggers signaling via guanine nucleotide-binding proteins (G proteins) and modulates the activity of downstream effectors, such as adenylate cyclase. ADGRD1 is coupled to G(s) G proteins and mediates activation of adenylate cyclase activity. Acts as a 5alpha-DHT receptor in muscle cells, thereby increasing intracellular cyclic AMP (cAMP) levels and enhancing muscle strength. This chain is Adhesion G-protein coupled receptor D1, found in Homo sapiens (Human).